Consider the following 911-residue polypeptide: MSGRDNRGAGGGGGGGGGGGHHHQPLSSAMGKLKEKLTRAGEELGYHRVESNLSTSNTGTSLDTILPEDPFPFPQAAPQRHPQQQFPHLQSPQQQRQQLQQQQLQQQQLHLQQPQQQLQQQQQPQQQLRLLHDVDDEPPLSFRPLLEDVDINEPPQQIHVQQQQQQLPRTALRASGSLELTPLPPPPTSLEPHRDRQQRSIVTGGEELQRSKQSLKGSRVSFEKPRGEQLPAKAAESSDEDSFEDKRIGFQQQKATSVDHKGILKDLKHILANDNRRQFQAKKHVSLDIKGTRFLKDLLKDSSSEEEFHKTRREFQGRKHQSLDPRVTFKLDKVLQGSSTDSDEEGDDAEHKRLIHRPKDITKPVIIDLKDLESESDEDFLTSRQNFQQQRSISTDSRKSRRLYEMDEMGNKRGDNIRHAVPFVRQITEDGKPKLEVYRPTTNPIYIWTQVLAALSVSLGSLVVGFASAYTSPALVSMTNTNLTSFVVTPQAASWVGGIMPLAGLAGGIAGGPFIEYLGRRNTILATAVPFIVSWLLIACAVNVIMVLCGRFLAGFCVGIASLSLPVYLGETVQPEVRGTLGLLPTAFGNIGILLCFVAGTYMDWSMLAFLGASLPVPFLILMFLIPETPRWYVSRGREERARKALVWLRGKEADVEPELKGLMRSQADADRQATQNKMLELLKRSNLKPLSISLGLMFFQQLSGINAVIFYTVQIFQDAGSTIDGNVCTIIVGVVNFAATFIATILIDRAGRKVLLYVSNVMMVLTLFVLGGFFYCKSSGMDTSNVGWLPLSCFVIYILGFSLGFGPIPWLMMGEILPAKIRGSAASVATAFNWSCTFVVTKSFQDMIDFMGAHGAFWMFGAICFIGLFFVIFYVPETQGKTLEDIERKMMGRVRRMSSVANIKPLSFNM.

Residues 1 to 256 (MSGRDNRGAG…RIGFQQQKAT (256 aa)) are disordered. Residues 1-446 (MSGRDNRGAG…VYRPTTNPIY (446 aa)) are Cytoplasmic-facing. Residues 8 to 19 (GAGGGGGGGGGG) show a composition bias toward gly residues. Over residues 32 to 50 (KLKEKLTRAGEELGYHRVE) the composition is skewed to basic and acidic residues. Low complexity-rich tracts occupy residues 51 to 64 (SNLS…SLDT), 76 to 129 (AAPQ…QQLR), and 156 to 166 (QQIHVQQQQQQ). Phosphoserine occurs at positions 302, 303, and 304. The interval 334–355 (VLQGSSTDSDEEGDDAEHKRLI) is disordered. Residues Ser-374 and Ser-376 each carry the phosphoserine modification. The disordered stretch occupies residues 380-402 (FLTSRQNFQQQRSISTDSRKSRR). Residues 384 to 395 (RQNFQQQRSIST) show a composition bias toward polar residues. A helical transmembrane segment spans residues 447–467 (IWTQVLAALSVSLGSLVVGFA). Residues 468 to 494 (SAYTSPALVSMTNTNLTSFVVTPQAAS) are Extracellular-facing. Asn-482 carries an N-linked (GlcNAc...) asparagine glycan. A helical transmembrane segment spans residues 495–515 (WVGGIMPLAGLAGGIAGGPFI). At 516-527 (EYLGRRNTILAT) the chain is on the cytoplasmic side. Residues 528–548 (AVPFIVSWLLIACAVNVIMVL) traverse the membrane as a helical segment. Over 549 to 551 (CGR) the chain is Extracellular. The chain crosses the membrane as a helical span at residues 552–572 (FLAGFCVGIASLSLPVYLGET). Residues 573–578 (VQPEVR) lie on the Cytoplasmic side of the membrane. The chain crosses the membrane as a helical span at residues 579-599 (GTLGLLPTAFGNIGILLCFVA). The Extracellular segment spans residues 600 to 606 (GTYMDWS). The helical transmembrane segment at 607 to 627 (MLAFLGASLPVPFLILMFLIP) threads the bilayer. The Cytoplasmic segment spans residues 628–690 (ETPRWYVSRG…ELLKRSNLKP (63 aa)). Residues 691 to 711 (LSISLGLMFFQQLSGINAVIF) traverse the membrane as a helical segment. Residues 712-727 (YTVQIFQDAGSTIDGN) lie on the Extracellular side of the membrane. The chain crosses the membrane as a helical span at residues 728–748 (VCTIIVGVVNFAATFIATILI). Over 749–754 (DRAGRK) the chain is Cytoplasmic. The helical transmembrane segment at 755 to 775 (VLLYVSNVMMVLTLFVLGGFF) threads the bilayer. Over 776 to 794 (YCKSSGMDTSNVGWLPLSC) the chain is Extracellular. The chain crosses the membrane as a helical span at residues 795–815 (FVIYILGFSLGFGPIPWLMMG). Residues 816 to 821 (EILPAK) are Cytoplasmic-facing. A helical transmembrane segment spans residues 822-842 (IRGSAASVATAFNWSCTFVVT). Over 843 to 855 (KSFQDMIDFMGAH) the chain is Extracellular. The chain crosses the membrane as a helical span at residues 856–876 (GAFWMFGAICFIGLFFVIFYV). Over 877–911 (PETQGKTLEDIERKMMGRVRRMSSVANIKPLSFNM) the chain is Cytoplasmic. 2 positions are modified to phosphoserine: Ser-899 and Ser-900.

It belongs to the major facilitator superfamily. Sugar transporter (TC 2.A.1.1) family. Trehalose transporter subfamily.

It localises to the cell membrane. Its function is as follows. Low-capacity facilitative transporter for trehalose. Does not transport maltose, sucrose or lactose. Mediates the bidirectional transfer of trehalose. Responsible for the transport of trehalose synthesized in the fat body and the incorporation of trehalose into other tissues that require a carbon source, thereby regulating trehalose levels in the hemolymph. The protein is Facilitated trehalose transporter Tret1 of Drosophila virilis (Fruit fly).